A 407-amino-acid polypeptide reads, in one-letter code: Protoasukamycin 4-monooxygenase (407 aa).

In terms of assembly, does not interact with AsuE2, suggesting a possible transient interaction between the two enzymes instead of formation of a stable complex. FMN is required as a cofactor. It depends on FAD as a cofactor. Requires riboflavin as cofactor.

The enzyme catalyses protoasukamycin + NADH + O2 + H(+) = 4-hydroxyprotoasukamycin + NAD(+) + H2O. Its pathway is antibiotic biosynthesis. With respect to regulation, when flavin concentration is low, activity is enhanced by the presence of the NADH-dependent flavin reductase AsuE2. In the presence of abundant flavin, activity of AsuE1 is not affected by AsuE2. Functionally, involved in the biosynthesis of the antibiotic asukamycin. Catalyzes the conversion of protoasukamycin to 4-hydroxyprotoasukamycin. Can also convert some protoasukamycin derivatives into their corresponding 4-hydroxyprotoasukamycin derivatives. Can also use NADPH, but catalytic efficiency is 50-fold higher with NADH. The protein is Protoasukamycin 4-monooxygenase of Streptomyces nodosus subsp. asukaensis.